The primary structure comprises 190 residues: ADP-ribosylation factor F (190 aa).

Residues 34 to 40 (DGAGKST), 75 to 79 (DIGGQ), and 136 to 139 (NKQD) each bind GTP.

This sequence belongs to the small GTPase superfamily. Arf family.

The protein resides in the golgi apparatus. Functionally, GTP-binding protein that may be involved in protein trafficking. May modulate vesicle budding and uncoating within the Golgi apparatus. This chain is ADP-ribosylation factor F (arrF), found in Dictyostelium discoideum (Social amoeba).